The following is a 290-amino-acid chain: Undecaprenyl-diphosphatase 2 (290 aa).

6 helical membrane passes run 104-124 (WMVIVGTLPVAVLGYLGKDLI), 128-148 (LRNLWITATMLVLFSFVFILA), 174-194 (CLALIPGVSRSGGTVSAGLFL), 205-225 (SFLLAIPAVLASGLFSLPDAF), 237-257 (QLFVGTAIAFAVGYASIAWLL), and 268-288 (FALWRIPLGLAVMGLLAFGVL).

It belongs to the UppP family.

The protein resides in the cell membrane. It catalyses the reaction di-trans,octa-cis-undecaprenyl diphosphate + H2O = di-trans,octa-cis-undecaprenyl phosphate + phosphate + H(+). Functionally, catalyzes the dephosphorylation of undecaprenyl diphosphate (UPP). Confers resistance to bacitracin. In Corynebacterium jeikeium (strain K411), this protein is Undecaprenyl-diphosphatase 2.